Consider the following 316-residue polypeptide: Ribosomal protein L11 methyltransferase (316 aa).

T159, G179, D201, and N243 together coordinate S-adenosyl-L-methionine.

This sequence belongs to the methyltransferase superfamily. PrmA family.

It is found in the cytoplasm. The catalysed reaction is L-lysyl-[protein] + 3 S-adenosyl-L-methionine = N(6),N(6),N(6)-trimethyl-L-lysyl-[protein] + 3 S-adenosyl-L-homocysteine + 3 H(+). Functionally, methylates ribosomal protein L11. The sequence is that of Ribosomal protein L11 methyltransferase from Gloeobacter violaceus (strain ATCC 29082 / PCC 7421).